A 181-amino-acid chain; its full sequence is tRNA-splicing endonuclease (181 aa).

Catalysis depends on residues tyrosine 118, histidine 126, and lysine 157.

This sequence belongs to the tRNA-intron endonuclease family. Archaeal short subfamily. As to quaternary structure, homotetramer; although the tetramer contains four active sites, only two participate in the cleavage. Therefore, it should be considered as a dimer of dimers.

It carries out the reaction pretRNA = a 3'-half-tRNA molecule with a 5'-OH end + a 5'-half-tRNA molecule with a 2',3'-cyclic phosphate end + an intron with a 2',3'-cyclic phosphate and a 5'-hydroxyl terminus.. Endonuclease that removes tRNA introns. Cleaves pre-tRNA at the 5'- and 3'-splice sites to release the intron. The products are an intron and two tRNA half-molecules bearing 2',3' cyclic phosphate and 5'-OH termini. Recognizes a pseudosymmetric substrate in which 2 bulged loops of 3 bases are separated by a stem of 4 bp. In Sulfolobus acidocaldarius (strain ATCC 33909 / DSM 639 / JCM 8929 / NBRC 15157 / NCIMB 11770), this protein is tRNA-splicing endonuclease.